The chain runs to 529 residues: Peptide chain release factor 3 (529 aa).

The tr-type G domain occupies 11 to 280; the sequence is SKRRTFAIIS…GLTDWAPAPL (270 aa). Residues 20 to 27, 88 to 92, and 142 to 145 contribute to the GTP site; these read SHPDAGKT, DTPGH, and NKLD.

It belongs to the TRAFAC class translation factor GTPase superfamily. Classic translation factor GTPase family. PrfC subfamily.

Its subcellular location is the cytoplasm. In terms of biological role, increases the formation of ribosomal termination complexes and stimulates activities of RF-1 and RF-2. It binds guanine nucleotides and has strong preference for UGA stop codons. It may interact directly with the ribosome. The stimulation of RF-1 and RF-2 is significantly reduced by GTP and GDP, but not by GMP. The sequence is that of Peptide chain release factor 3 from Vibrio vulnificus (strain YJ016).